Here is a 334-residue protein sequence, read N- to C-terminus: Leucine carboxyl methyltransferase 1 (334 aa).

Residues Lys37, Arg73, Gly98, Asp122, 171-172 (DL), and Glu198 each bind S-adenosyl-L-methionine.

Belongs to the methyltransferase superfamily. LCMT family.

It carries out the reaction [phosphatase 2A protein]-C-terminal L-leucine + S-adenosyl-L-methionine = [phosphatase 2A protein]-C-terminal L-leucine methyl ester + S-adenosyl-L-homocysteine. Its function is as follows. Methylates the carboxyl group of the C-terminal leucine residue of protein phosphatase 2A catalytic subunits to form alpha-leucine ester residues. The polypeptide is Leucine carboxyl methyltransferase 1 (LCMT1) (Homo sapiens (Human)).